A 1072-amino-acid chain; its full sequence is MPKRLDINTILVIGSGPIVIGQAAEFDYSGTQACQSLKEEGYKVILVNSNPATIMTDTATADKVYIEPLTLEFVSRIIRKERPDAILPTLGGQTGLNMAVELAKSGVLEECGVEILGTKLSAIEQAEDRDLFRTLMQELNEPTPPSEIIHNLDEAYGFVNEIGYPVIVRPAFTLGGTGGGICHNEEELIEIVTSGLKHSPVTQCLLEKSIAGCKEIEYEVMRDSNDNAIVVCNMENIDPVGVHTGDSIVVAPSQTLSDREYQMLRNTSLRIIRALGIEGGCNVQLALDPYSFQYYVIEVNPRVSRSSALASKATGYPIAKLAAKIAVGLTLDEIVNPVTQKTYACFEPALDYVVSKIPRWPFDKFESANRTLGTQMKATGEVMSIGRNLEESLLKAVRSLELGIYHLELDHLKELDKETMKKRIIKADDERLFIVAEAIRQGVTKEEINEWCEMDFFFLQKVENIVNMEREVKANVGNMEVLQTAKEMGFSDHYIAAAWNKTEREIYDMRKENNMTPVFKMVDTCAAEFESATPYYYSTYADENELIVTDRKSVVVLGSGPIRIGQGVEFDYATVHSVWAIKEAGYEAIIINNNPETVSTDFSISDKLYFEPLTIEDVMHIIDLEKPEGVIVQFGGQTAINLAAKLEEHGVKILGTSLEDLDRAEDRDKFEAALTKLGIPQPVGKTATTVEQAVAIAEEIGYPVLVRPSYVLGGRAMEIVYRQEELLHYMKNAVKVHADHPVLIDRYMVGKEIEVDAISDGENVFIPGIMEHIERAGVHSGDSIGVYPPQSLSEKLKEQIIEHTIALGKGLNIVGLLNIQFVVFKDQVYVIEVNPRASRTVPFLSKITGVPMANVATKVILGQDLVEQGYGTGYHPEEKEVYVKAPVFSFAKLRSVDTTLGPEMKSTGEVMGKDLTLEKALYKGLVASGINIPTHGSVIITVADKDKEEAMEIAKRFHEIGYNLLATAGTAQSLTEQNIPVQVVNKIDSEDYNLLDIIRQGKAQFVINTLTKGKQPARDGFRIRRESVENGVACLTSLDTTRAILRVLESMTFSAHSMKEITQTKRHEVVHA.

Positions 1–401 (MPKRLDINTI…SLLKAVRSLE (401 aa)) are carboxyphosphate synthetic domain. ATP-binding residues include arginine 129, arginine 169, glycine 175, glycine 176, lysine 208, isoleucine 210, glutamate 215, glycine 241, valine 242, histidine 243, glutamine 284, and glutamate 298. In terms of domain architecture, ATP-grasp 1 spans 133–327 (RTLMQELNEP…IAKLAAKIAV (195 aa)). Glutamine 284, glutamate 298, and asparagine 300 together coordinate Mg(2+). Mn(2+) is bound by residues glutamine 284, glutamate 298, and asparagine 300. The tract at residues 402-546 (LGIYHLELDH…YSTYADENEL (145 aa)) is oligomerization domain. The carbamoyl phosphate synthetic domain stretch occupies residues 547 to 929 (IVTDRKSVVV…ALYKGLVASG (383 aa)). Residues 671–861 (EAALTKLGIP…MANVATKVIL (191 aa)) enclose the ATP-grasp 2 domain. Arginine 707, arginine 746, glutamate 752, glycine 777, valine 778, histidine 779, serine 780, glutamine 820, and glutamate 832 together coordinate ATP. Mg(2+)-binding residues include glutamine 820, glutamate 832, and asparagine 834. Mn(2+) is bound by residues glutamine 820, glutamate 832, and asparagine 834. One can recognise an MGS-like domain in the interval 930–1072 (INIPTHGSVI…QTKRHEVVHA (143 aa)). Residues 930 to 1072 (INIPTHGSVI…QTKRHEVVHA (143 aa)) form an allosteric domain region.

Belongs to the CarB family. Composed of two chains; the small (or glutamine) chain promotes the hydrolysis of glutamine to ammonia, which is used by the large (or ammonia) chain to synthesize carbamoyl phosphate. Tetramer of heterodimers (alpha,beta)4. The cofactor is Mg(2+). Mn(2+) is required as a cofactor.

The enzyme catalyses hydrogencarbonate + L-glutamine + 2 ATP + H2O = carbamoyl phosphate + L-glutamate + 2 ADP + phosphate + 2 H(+). The catalysed reaction is hydrogencarbonate + NH4(+) + 2 ATP = carbamoyl phosphate + 2 ADP + phosphate + 2 H(+). It participates in amino-acid biosynthesis; L-arginine biosynthesis; carbamoyl phosphate from bicarbonate: step 1/1. Its pathway is pyrimidine metabolism; UMP biosynthesis via de novo pathway; (S)-dihydroorotate from bicarbonate: step 1/3. In terms of biological role, large subunit of the glutamine-dependent carbamoyl phosphate synthetase (CPSase). CPSase catalyzes the formation of carbamoyl phosphate from the ammonia moiety of glutamine, carbonate, and phosphate donated by ATP, constituting the first step of 2 biosynthetic pathways, one leading to arginine and/or urea and the other to pyrimidine nucleotides. The large subunit (synthetase) binds the substrates ammonia (free or transferred from glutamine from the small subunit), hydrogencarbonate and ATP and carries out an ATP-coupled ligase reaction, activating hydrogencarbonate by forming carboxy phosphate which reacts with ammonia to form carbamoyl phosphate. In Bacillus anthracis (strain A0248), this protein is Carbamoyl phosphate synthase large chain.